We begin with the raw amino-acid sequence, 84 residues long: Small ribosomal subunit protein uS17 (84 aa).

It belongs to the universal ribosomal protein uS17 family. In terms of assembly, part of the 30S ribosomal subunit.

One of the primary rRNA binding proteins, it binds specifically to the 5'-end of 16S ribosomal RNA. The protein is Small ribosomal subunit protein uS17 of Alkaliphilus oremlandii (strain OhILAs) (Clostridium oremlandii (strain OhILAs)).